The primary structure comprises 564 residues: Benomyl/methotrexate resistance protein (564 aa).

The disordered stretch occupies residues 60-101; that stretch reads IDNQGEPNSSQSSSSNNTIVDNNNNNNNDVDGDKIVVTWDGD. Over residues 67–88 the composition is skewed to low complexity; the sequence is NSSQSSSSNNTIVDNNNNNNND. 12 helical membrane passes run 116-136, 153-173, 184-204, 210-229, 241-262, 274-294, 358-374, 393-411, 431-451, 457-476, 489-506, and 530-551; these read AFFI…SAVY, VATL…LVFS, TSIY…TALV, LCIL…ATGG, LPVG…GPFF, WTFW…CFTL, IYIA…FEVF, YMSI…IPVI, IPIA…FGWS, HWVG…FLIF, PHYI…RSVI, and WGSS…LFYL.

Belongs to the major facilitator superfamily. CAR1 family.

It is found in the membrane. Functionally, probable transporter. Confers resistance to benomyl and methotrexate. The chain is Benomyl/methotrexate resistance protein (MDR1) from Candida albicans (Yeast).